A 240-amino-acid chain; its full sequence is Thiamine-phosphate synthase (240 aa).

Residues 63 to 67 and asparagine 94 each bind 4-amino-2-methyl-5-(diphosphooxymethyl)pyrimidine; that span reads QYREK. 2 residues coordinate Mg(2+): aspartate 95 and aspartate 114. Threonine 133 is a binding site for 4-amino-2-methyl-5-(diphosphooxymethyl)pyrimidine. 159 to 161 is a 2-[(2R,5Z)-2-carboxy-4-methylthiazol-5(2H)-ylidene]ethyl phosphate binding site; that stretch reads TFT. Lysine 162 is a 4-amino-2-methyl-5-(diphosphooxymethyl)pyrimidine binding site. 2-[(2R,5Z)-2-carboxy-4-methylthiazol-5(2H)-ylidene]ethyl phosphate is bound by residues glycine 190 and 210-211; that span reads IS.

It belongs to the thiamine-phosphate synthase family. Mg(2+) is required as a cofactor.

It carries out the reaction 2-[(2R,5Z)-2-carboxy-4-methylthiazol-5(2H)-ylidene]ethyl phosphate + 4-amino-2-methyl-5-(diphosphooxymethyl)pyrimidine + 2 H(+) = thiamine phosphate + CO2 + diphosphate. It catalyses the reaction 2-(2-carboxy-4-methylthiazol-5-yl)ethyl phosphate + 4-amino-2-methyl-5-(diphosphooxymethyl)pyrimidine + 2 H(+) = thiamine phosphate + CO2 + diphosphate. The catalysed reaction is 4-methyl-5-(2-phosphooxyethyl)-thiazole + 4-amino-2-methyl-5-(diphosphooxymethyl)pyrimidine + H(+) = thiamine phosphate + diphosphate. Its pathway is cofactor biosynthesis; thiamine diphosphate biosynthesis; thiamine phosphate from 4-amino-2-methyl-5-diphosphomethylpyrimidine and 4-methyl-5-(2-phosphoethyl)-thiazole: step 1/1. Its function is as follows. Condenses 4-methyl-5-(beta-hydroxyethyl)thiazole monophosphate (THZ-P) and 2-methyl-4-amino-5-hydroxymethyl pyrimidine pyrophosphate (HMP-PP) to form thiamine monophosphate (TMP). This Methanosarcina mazei (strain ATCC BAA-159 / DSM 3647 / Goe1 / Go1 / JCM 11833 / OCM 88) (Methanosarcina frisia) protein is Thiamine-phosphate synthase.